Here is a 491-residue protein sequence, read N- to C-terminus: (R)-citramalate synthase CimA (491 aa).

The region spanning 3–254 (VRIFDTTLRD…DTKIKMEKLY (252 aa)) is the Pyruvate carboxyltransferase domain.

The protein belongs to the alpha-IPM synthase/homocitrate synthase family. As to quaternary structure, homodimer.

The catalysed reaction is pyruvate + acetyl-CoA + H2O = (3R)-citramalate + CoA + H(+). It participates in amino-acid biosynthesis; L-isoleucine biosynthesis; 2-oxobutanoate from pyruvate: step 1/3. Its function is as follows. Catalyzes the condensation of pyruvate and acetyl-coenzyme A to form (R)-citramalate. This Methanocaldococcus jannaschii (strain ATCC 43067 / DSM 2661 / JAL-1 / JCM 10045 / NBRC 100440) (Methanococcus jannaschii) protein is (R)-citramalate synthase CimA (cimA).